A 95-amino-acid chain; its full sequence is Fungal defensin plectasin (95 aa).

A signal peptide spans M1–A23. Residues A24–R55 constitute a propeptide that is removed on maturation. Beta-D-GlcNAc-(1-&gt;4)-Mur2Ac(oyl-L-Ala-gamma-D-Glu-L-Lys-D-Ala-D-Ala)-di-trans,octa-cis-undecaprenyl diphosphate contacts are provided by F57, G58, and C59. 3 disulfides stabilise this stretch: C59–C85, C70–C92, and C74–C94. A binds to membrane interface region spans residues G61 to D64. Residues D67, H73, Y84, A86, G88, C92, and K93 each coordinate beta-D-GlcNAc-(1-&gt;4)-Mur2Ac(oyl-L-Ala-gamma-D-Glu-L-Lys-D-Ala-D-Ala)-di-trans,octa-cis-undecaprenyl diphosphate. The binds to membrane interface stretch occupies residues A86 to C92.

It belongs to the invertebrate defensin family. Type 2 subfamily.

It is found in the secreted. Its subcellular location is the host cell membrane. Functionally, antimicrobial peptide that potently acts against several species of Gram-positive bacteria. It selectively inhibits peptidoglycan biosynthesis through complex formation with the cell wall precursor lipid II (1:1 molar ratio) thus inhibiting cell wall synthesis. It does not disrupt cell membranes. Is especially active against numerous clinical isolates of S.pneumoniae, including all 90 different serotypes and isolates resistant to clinically used antibiotics. In vitro, shows considerable selectivity for bacteria over mammalian cells. The peptide synthesized in D-amino acids does not show antibacterial activity. In vitro, acts on voltage-gated potassium channels by moderately inhibiting mammalian Kv1.3/KCNA3 (IC(50)=2.8 uM), and moderately inhibiting others potassium channels. The protein is Fungal defensin plectasin (DEF) of Pseudoplectania nigrella (Ebony cup).